A 91-amino-acid chain; its full sequence is Small ribosomal subunit protein bS16 (91 aa).

This sequence belongs to the bacterial ribosomal protein bS16 family.

The protein is Small ribosomal subunit protein bS16 of Staphylococcus haemolyticus (strain JCSC1435).